Reading from the N-terminus, the 378-residue chain is Chitinase (378 aa).

The signal sequence occupies residues 1–28 (MNFTVKYSFLVICLLCCLLSTYVSVIEG). A GH18 domain is found at 53–378 (GIIQGYYPSW…AIEYFVESLH (326 aa)). The Proton donor role is filled by Glu-174. Cys-220 and Cys-230 are joined by a disulfide.

It belongs to the glycosyl hydrolase 18 family. As to quaternary structure, forms a hetero-multimeric, high molecular weight complex composed of at least CHT1, SOAP AND WARP. Within the complex, may interact with WARP via a disulfide bond.

It localises to the secreted. It is found in the cytoplasmic vesicle. The protein localises to the secretory vesicle. The protein resides in the microneme. The catalysed reaction is Random endo-hydrolysis of N-acetyl-beta-D-glucosaminide (1-&gt;4)-beta-linkages in chitin and chitodextrins.. With respect to regulation, inhibited by allosamidin. Functionally, endochitinase that cleaves beta-1,4-linkages between tri- and tetramers of N-acetylglucosamine (GlcNAc) from penta- and hexameric chitin oligomers. Does not cleave smaller chitin oligosaccharides. Required to cross the acellular, chitin-containing peritrophic matrix (PM) which is formed around the ingested blood meal in the mosquito midgut allowing the ookinete to invade the mosquito gut epithelium. This Plasmodium falciparum (isolate 3D7) protein is Chitinase.